The sequence spans 147 residues: Hemoglobin subunit epsilon-4 (147 aa).

The Globin domain maps to 3 to 147; it reads HFTTEEKAAV…VANALAHKYH (145 aa). Histidine 64 and histidine 93 together coordinate heme b.

The protein belongs to the globin family. Red blood cells.

Hemoglobin epsilon chain is a beta-type chain found in early embryos. This Bos taurus (Bovine) protein is Hemoglobin subunit epsilon-4 (HBE4).